The following is a 113-amino-acid chain: Large ribosomal subunit protein bL19 (113 aa).

This sequence belongs to the bacterial ribosomal protein bL19 family.

In terms of biological role, this protein is located at the 30S-50S ribosomal subunit interface and may play a role in the structure and function of the aminoacyl-tRNA binding site. This chain is Large ribosomal subunit protein bL19, found in Carboxydothermus hydrogenoformans (strain ATCC BAA-161 / DSM 6008 / Z-2901).